The following is a 55-amino-acid chain: Large ribosomal subunit protein bL33 (55 aa).

It belongs to the bacterial ribosomal protein bL33 family.

The chain is Large ribosomal subunit protein bL33 from Bartonella henselae (strain ATCC 49882 / DSM 28221 / CCUG 30454 / Houston 1) (Rochalimaea henselae).